Consider the following 269-residue polypeptide: Nuclear egress protein 2 (269 aa).

Over 1 to 247 (MSRRTYVRSE…VWKLALPVAN (247 aa)) the chain is Perinuclear space. Residues 248–268 (VTYALFIVIVLVVVLGAVLFW) form a helical membrane-spanning segment. Position 269 (Lys269) is a topological domain, nuclear.

It belongs to the herpesviridae NEC2 protein family. Forms a heterohexameric complex with NEC1. Post-translationally, phosphorylated.

It is found in the host nucleus inner membrane. In terms of biological role, plays an essential role in virion nuclear egress, the first step of virion release from infected cell. Within the host nucleus, NEC1 interacts with the newly formed capsid through the vertexes and directs it to the inner nuclear membrane by associating with NEC2. Induces the budding of the capsid at the inner nuclear membrane as well as its envelopment into the perinuclear space. There, the NEC1/NEC2 complex promotes the fusion of the enveloped capsid with the outer nuclear membrane and the subsequent release of the viral capsid into the cytoplasm where it will reach the secondary budding sites in the host Golgi or trans-Golgi network. The chain is Nuclear egress protein 2 from Homo sapiens (Human).